The primary structure comprises 169 residues: Ribosome maturation factor RimM (169 aa).

The 73-residue stretch at 97-169 (EDEYYWTDLV…IITADWGLDY (73 aa)) folds into the PRC barrel domain.

The protein belongs to the RimM family. In terms of assembly, binds ribosomal protein uS19.

The protein localises to the cytoplasm. Its function is as follows. An accessory protein needed during the final step in the assembly of 30S ribosomal subunit, possibly for assembly of the head region. Essential for efficient processing of 16S rRNA. May be needed both before and after RbfA during the maturation of 16S rRNA. It has affinity for free ribosomal 30S subunits but not for 70S ribosomes. In Neisseria meningitidis serogroup C / serotype 2a (strain ATCC 700532 / DSM 15464 / FAM18), this protein is Ribosome maturation factor RimM.